Consider the following 245-residue polypeptide: Serine/arginine-rich splicing factor 1B (245 aa).

The RRM 1 domain maps to 15 to 90 (CRIYVGNLPP…YRLRVEFPRS (76 aa)). Disordered stretches follow at residues 89-116 (RSGR…PPSR) and 192-245 (KVDG…RSRT). Residues 91-106 (GRGGGRGGGGGGGVGA) are compositionally biased toward gly residues. Residues 120-194 (YRVIVSGLPP…ETAYIRVKVD (75 aa)) enclose the RRM 2 domain. Residues 204–245 (SRSRSRSRSRSRSNSRSRSYSPRRSRGSPRYSPRHSRSRSRT) show a composition bias toward basic residues.

Belongs to the splicing factor SR family.

The protein localises to the cytoplasm. It is found in the nucleus speckle. May play a role in preventing exon skipping, ensuring the accuracy of splicing and regulating alternative splicing. This is Serine/arginine-rich splicing factor 1B (srsf1b) from Danio rerio (Zebrafish).